The following is a 637-amino-acid chain: Transcription termination factor FttA (637 aa).

Residues 4-71 (EDVLLDLKHK…IAMRPDPRVL (68 aa)) form a KHa region. The KHb stretch occupies residues 72 to 139 (ATPEDSISII…WIPKVVRTPP (68 aa)). Residues 180 to 383 (WVRVTALGGC…VISEATYGNA (204 aa)) form a metallo-beta-lactamase N-terminus region. 6 residues coordinate Zn(2+): His242, His244, Asp246, His247, His329, and Asp352. The tract at residues 384–578 (NAFQPALKDA…MEVQVVDGFS (195 aa)) is beta-Casp. The tract at residues 579-637 (GHSDRRQLMEYVKRMQPRPERVFTEHGDEKACVDLASSVYKKLKIETRALTNLETVRLL) is metallo-beta-lactamase C-terminus. A Zn(2+)-binding site is contributed by His604.

Belongs to the metallo-beta-lactamase superfamily. RNA-metabolizing metallo-beta-lactamase-like family. FttA subfamily. In terms of assembly, homodimer. Interacts with RNA polymerase (RNAP), interacts with the Spt4-Spt5 complex. Requires Zn(2+) as cofactor.

Its function is as follows. Terminates transcription on the whole genome. Termination is linked to FttA-mediated RNA cleavage and does not require NTP hydrolysis. Cleaves endonucleolytically at the RNA exit channel of RNA polymerase (RNAP); the 5'-3' exonuclease activity of this protein degrades the nascent RNA released from RNAP. The chain is Transcription termination factor FttA from Methanosarcina mazei (strain ATCC BAA-159 / DSM 3647 / Goe1 / Go1 / JCM 11833 / OCM 88) (Methanosarcina frisia).